A 103-amino-acid chain; its full sequence is Large ribosomal subunit protein uL23c (103 aa).

This sequence belongs to the universal ribosomal protein uL23 family. Part of the 50S ribosomal subunit.

It localises to the plastid. It is found in the chloroplast. In terms of biological role, binds to 23S rRNA. This Gracilaria tenuistipitata var. liui (Red alga) protein is Large ribosomal subunit protein uL23c (rpl23).